Reading from the N-terminus, the 688-residue chain is Homoaconitase, mitochondrial (688 aa).

[4Fe-4S] cluster-binding residues include C335, C395, and C398. The tract at residues 468-494 is disordered; sequence SIDLPKSSGNTGATSEEPISEDDTSEA.

The protein belongs to the aconitase/IPM isomerase family. It depends on [4Fe-4S] cluster as a cofactor.

Its subcellular location is the mitochondrion. The enzyme catalyses (2R,3S)-homoisocitrate = cis-homoaconitate + H2O. It functions in the pathway amino-acid biosynthesis; L-lysine biosynthesis via AAA pathway; L-alpha-aminoadipate from 2-oxoglutarate: step 3/5. Its function is as follows. Catalyzes the reversible hydration of cis-homoaconitate to (2R,3S)-homoisocitrate, a step in the alpha-aminoadipate pathway for lysine biosynthesis. In Candida parapsilosis (Yeast), this protein is Homoaconitase, mitochondrial (LYS4).